Reading from the N-terminus, the 430-residue chain is tRNA-2-methylthio-N(6)-dimethylallyladenosine synthase (430 aa).

The 110-residue stretch at 2 to 111 (KKIHIKTYGC…IPQAVERAIN (110 aa)) folds into the MTTase N-terminal domain. [4Fe-4S] cluster is bound by residues Cys-11, Cys-47, Cys-76, Cys-147, Cys-151, and Cys-154. A Radical SAM core domain is found at 133 to 364 (RNSKHHAWIT…LNLQKEINKQ (232 aa)). The 62-residue stretch at 367-428 (ENYLNKTVEI…AGPLYGDIIK (62 aa)) folds into the TRAM domain.

The protein belongs to the methylthiotransferase family. MiaB subfamily. In terms of assembly, monomer. It depends on [4Fe-4S] cluster as a cofactor.

It localises to the cytoplasm. It carries out the reaction N(6)-dimethylallyladenosine(37) in tRNA + (sulfur carrier)-SH + AH2 + 2 S-adenosyl-L-methionine = 2-methylsulfanyl-N(6)-dimethylallyladenosine(37) in tRNA + (sulfur carrier)-H + 5'-deoxyadenosine + L-methionine + A + S-adenosyl-L-homocysteine + 2 H(+). In terms of biological role, catalyzes the methylthiolation of N6-(dimethylallyl)adenosine (i(6)A), leading to the formation of 2-methylthio-N6-(dimethylallyl)adenosine (ms(2)i(6)A) at position 37 in tRNAs that read codons beginning with uridine. The chain is tRNA-2-methylthio-N(6)-dimethylallyladenosine synthase from Thermosipho melanesiensis (strain DSM 12029 / CIP 104789 / BI429).